A 143-amino-acid polypeptide reads, in one-letter code: Large ribosomal subunit protein bL17 (143 aa).

It belongs to the bacterial ribosomal protein bL17 family. Part of the 50S ribosomal subunit. Contacts protein L32.

The polypeptide is Large ribosomal subunit protein bL17 (Bartonella quintana (strain Toulouse) (Rochalimaea quintana)).